The following is a 271-amino-acid chain: D-methionine-binding lipoprotein MetQ (271 aa).

The N-terminal stretch at Met-1–Gly-22 is a signal peptide. Residue Cys-23 is the site of N-palmitoyl cysteine attachment. Cys-23 carries S-diacylglycerol cysteine lipidation.

It belongs to the NlpA lipoprotein family.

The protein localises to the cell membrane. This protein is a component of a D-methionine permease, a binding protein-dependent, ATP-driven transport system. This is D-methionine-binding lipoprotein MetQ (metQ) from Escherichia coli (strain K12).